A 169-amino-acid chain; its full sequence is MRDAVTSLIRNYDTTGRYFDRDAIESLKDYFASGNDRITVAAMINSQSAEIVKAAANSLFEAVPELLLAGGNAYTTRRFSACLRDMDYYLRYGTYALIAGDMDVLNERVLQGLRETYNSLGVPIAPTVRGIQFLKDAIKEMAAAAGIANTAFIDEPFDHMTRELSEVDL.

N4-methylasparagine is present on Asn-72. Cys-82 contacts (2R,3E)-phycocyanobilin.

It belongs to the phycobiliprotein family. Heterodimer of ApcE and this beta chain. Post-translationally, contains one covalently linked bilin chromophore. The chromophore is added by phycocyanobilin lyase CpcUS.

The protein resides in the cellular thylakoid membrane. Its function is as follows. A variant beta-allophycocyanin (AP) which forms a complex with ApcE, a phycobilisome terminal emitter that influences energy transfer to photosystem II. This chain is Allophycocyanin subunit beta-18 (apcF), found in Picosynechococcus sp. (strain ATCC 27264 / PCC 7002 / PR-6) (Agmenellum quadruplicatum).